Here is a 396-residue protein sequence, read N- to C-terminus: S-adenosylmethionine synthase (396 aa).

ATP is bound at residue histidine 14. Aspartate 16 serves as a coordination point for Mg(2+). K(+) is bound at residue glutamate 42. L-methionine-binding residues include glutamate 55 and glutamine 98. Positions 98 to 108 (QSPDIAQGVHG) are flexible loop. Residues 167 to 169 (DAK), 234 to 235 (RF), aspartate 243, 249 to 250 (RK), serine 266, and lysine 270 each bind ATP. Residue aspartate 243 participates in L-methionine binding. Residue lysine 274 coordinates L-methionine.

The protein belongs to the AdoMet synthase family. Homotetramer; dimer of dimers. It depends on Mg(2+) as a cofactor. The cofactor is K(+).

The protein resides in the cytoplasm. The enzyme catalyses L-methionine + ATP + H2O = S-adenosyl-L-methionine + phosphate + diphosphate. Its pathway is amino-acid biosynthesis; S-adenosyl-L-methionine biosynthesis; S-adenosyl-L-methionine from L-methionine: step 1/1. Catalyzes the formation of S-adenosylmethionine (AdoMet) from methionine and ATP. The overall synthetic reaction is composed of two sequential steps, AdoMet formation and the subsequent tripolyphosphate hydrolysis which occurs prior to release of AdoMet from the enzyme. In Treponema pallidum (strain Nichols), this protein is S-adenosylmethionine synthase.